A 511-amino-acid chain; its full sequence is ATP synthase subunit alpha (511 aa).

Position 169-176 (169-176 (GDRQTGKT)) interacts with ATP.

The protein belongs to the ATPase alpha/beta chains family. In terms of assembly, F-type ATPases have 2 components, CF(1) - the catalytic core - and CF(0) - the membrane proton channel. CF(1) has five subunits: alpha(3), beta(3), gamma(1), delta(1), epsilon(1). CF(0) has three main subunits: a(1), b(2) and c(9-12). The alpha and beta chains form an alternating ring which encloses part of the gamma chain. CF(1) is attached to CF(0) by a central stalk formed by the gamma and epsilon chains, while a peripheral stalk is formed by the delta and b chains.

It is found in the cell inner membrane. The catalysed reaction is ATP + H2O + 4 H(+)(in) = ADP + phosphate + 5 H(+)(out). Produces ATP from ADP in the presence of a proton gradient across the membrane. The alpha chain is a regulatory subunit. The chain is ATP synthase subunit alpha from Bartonella tribocorum (strain CIP 105476 / IBS 506).